The following is a 141-amino-acid chain: Photosystem I reaction center subunit IV A, chloroplastic (141 aa).

A chloroplast-targeting transit peptide spans 1 to 49 (MASCNMASAASNFLVATPNVASNTNTSRTTMLFFSSKNYGSTAPRLVVR). Residues 57 to 73 (PAAAATAEPAEAPVKAA) show a composition bias toward low complexity. The tract at residues 57–83 (PAAAATAEPAEAPVKAAKPPPIGPKRG) is disordered.

It belongs to the PsaE family. 2 isoforms exists (ratio 1:1). With or without the N-terminal alanine.

Its subcellular location is the plastid. It is found in the chloroplast thylakoid membrane. Its function is as follows. Stabilizes the interaction between PsaC and the PSI core, assists the docking of the ferredoxin to PSI and interacts with ferredoxin-NADP oxidoreductase. In Nicotiana sylvestris (Wood tobacco), this protein is Photosystem I reaction center subunit IV A, chloroplastic (PSAEA).